A 1247-amino-acid polypeptide reads, in one-letter code: F-box/WD repeat-containing protein A (1247 aa).

Residues M1–K214 enclose the START domain. 2 disordered regions span residues G484 to I514 and Q552 to K576. The segment covering Q552–Q566 has biased composition (low complexity). Residues N631–L677 enclose the F-box domain. 2 disordered regions span residues S697–Q744 and G833–N856. Low complexity-rich tracts occupy residues N707–S719 and Q726–Q744. Over residues G833–P846 the composition is skewed to polar residues. 7 WD repeats span residues G895 to E934, D945 to I984, R988 to N1025, A1029 to T1073, G1076 to S1114, K1119 to I1158, and N1218 to F1247.

As to quaternary structure, component of an SCF complex including at least culA. Formation of this complex appears to require activity of the MAP kinase erk2. Interacts with regA.

Its function is as follows. Substrate recognition component of a SCF (SKP1-CUL1-F-box protein) E3 ubiquitin-protein ligase complex which mediates the ubiquitination and subsequent proteasomal degradation of target proteins. May target the cAMP phosphodiesterase regA for degradation leading to an increase in cAMP and PKA activity. Promotes development of prestalk cells as opposed to prespores within the developing fruiting body. Required for culmination and fruiting body development. In Dictyostelium discoideum (Social amoeba), this protein is F-box/WD repeat-containing protein A (fbxA).